A 345-amino-acid polypeptide reads, in one-letter code: Phosphoribosylformylglycinamidine cyclo-ligase (345 aa).

Belongs to the AIR synthase family.

It localises to the cytoplasm. The catalysed reaction is 2-formamido-N(1)-(5-O-phospho-beta-D-ribosyl)acetamidine + ATP = 5-amino-1-(5-phospho-beta-D-ribosyl)imidazole + ADP + phosphate + H(+). The protein operates within purine metabolism; IMP biosynthesis via de novo pathway; 5-amino-1-(5-phospho-D-ribosyl)imidazole from N(2)-formyl-N(1)-(5-phospho-D-ribosyl)glycinamide: step 2/2. This chain is Phosphoribosylformylglycinamidine cyclo-ligase, found in Shewanella amazonensis (strain ATCC BAA-1098 / SB2B).